A 224-amino-acid chain; its full sequence is UPF0758 protein Nmul_A2138 (224 aa).

The MPN domain maps to 102–224 (AMDSPGPVRA…TLSFAEQGLI (123 aa)). Positions 173, 175, and 186 each coordinate Zn(2+). A JAMM motif motif is present at residues 173–186 (HNHPSGAAEPSHAD).

Belongs to the UPF0758 family.

The chain is UPF0758 protein Nmul_A2138 from Nitrosospira multiformis (strain ATCC 25196 / NCIMB 11849 / C 71).